We begin with the raw amino-acid sequence, 854 residues long: MSRKRSTKPKPAAKIALKKENDQFLEALKLYEGKQYKKSLKLLDAILKKDGSHVDSLALKGLDLYSVGEKDDAASYVANAIRKIEGASASPICCHVLGIYMRNTKEYKESIKWFTAALNNGSTNKQIYRDLATLQSQIGDFKNALVSRKKYWEAFLGYRANWTSLAVAQDVNGERQQAINTLSQFEKLAEGKISDSEKYEHSECLMYKNDIMYKAASDNQDKLQNVLKHLNDIEPCVFDKFGLLERKATIYMKLGQLKDASIVYRTLIKRNPDNFKYYKLLEVSLGIQGDNKLKKALYGKLEQFYPRCEPPKFIPLTFLQDKEELSKKLREYVLPQLERGVPATFSNVKPLYQRRKSKVSPLLEKIVLDYLSGLDPTQDPIPFIWTNYYLSQHFLFLKDFPKAQEYIDAALDHTPTLVEFYILKARILKHLGLMDTAAGILEEGRQLDLQDRFINCKTVKYFLRANNIDKAVEVASLFTKNDDSVNGIKDLHLVEASWFIVEQAEAYYRLYLDRKKKLDDLASLKKEVESDKSEQIANDIKENQWLVRKYKGLALKRFNAIPKFYKQFEDDQLDFHSYCMRKGTPRAYLEMLEWGKALYTKPMYVRAMKEASKLYFQMHDDRLKRKSDSLDENSDEIQNNGQNSSSQKKKAKKEAAAMNKRKETEAKSVAAYPSDQDNDVFGEKLIETSTPMEDFATEFYNNYSMQVREDERDYILDFEFNYRIGKLALCFASLNKFAKRFGTTSGLFGSMAIVLLHATRNDTPFDPILKKVVTKSLEKEYSENFPLNEISNNSFDWLNFYQEKFGKNDINGLLFLYRYRDDVPIGSSNLKEMIISSLSPLEPHSQNEILQYYL.

Position 2 is an N-acetylserine (serine 2). TPR repeat units lie at residues 20–53, 54–87, 91–124, 126–162, 241–274, 384–417, and 452–485; these read ENDQ…DGSH, VDSL…IEGA, PICC…GSTN, QIYR…RANW, FGLL…NPDN, IWTN…TPTL, and RFIN…DDSV. Positions 623–667 form a coiled coil; the sequence is LKRKSDSLDENSDEIQNNGQNSSSQKKKAKKEAAAMNKRKETEAK. A disordered region spans residues 626-668; it reads KSDSLDENSDEIQNNGQNSSSQKKKAKKEAAAMNKRKETEAKS. Residue serine 674 is modified to Phosphoserine. The stretch at 728-761 is one TPR 8 repeat; that stretch reads ALCFASLNKFAKRFGTTSGLFGSMAIVLLHATRN.

As to quaternary structure, component of the N-terminal acetyltransferase A (NatA) complex, which is composed of ARD1, NAT1 and NAT5. Can self-associate. NAT1 associates with the nascent polypeptide chain and the ribosome. In terms of processing, the N-terminus is blocked.

It is found in the cytoplasm. Its function is as follows. Non-catalytic component of the NatA N-terminal acetyltransferase, which catalyzes acetylation of proteins beginning with Met-Ser, Met-Gly and Met-Ala. N-acetylation plays a role in normal eukaryotic translation and processing, protect against proteolytic degradation and protein turnover. NAT1 anchors ARD1 and NAT5 to the ribosome and may present the N termini of nascent polypeptides for acetylation. The chain is N-terminal acetyltransferase A complex subunit NAT1 (NAT1) from Saccharomyces cerevisiae (strain ATCC 204508 / S288c) (Baker's yeast).